A 412-amino-acid polypeptide reads, in one-letter code: MKAARFVMRSARSLSSAGLVPREVEHFSRYSPSPLSMKQLLDFGSENACERTSSAFLRQELPVRLANILKEIDILPDRLVNTSSVQLVKSWYIQSLMELVEFHERSPDDQKVLSDFVDTLITVRNRHHNVVPTMAQGIIEYKDSCTVDPVTNQNLQYFLDRFYMNRISTRMLMNQHILIFSDSQTGNPSHIGSIDPNCNVAAVVQDAFECSRMLCDQYYLTSPELKLTQVNGKFPGEPIHIVYVPSHLHHMLFELFKNAMRATVEHQENEPSLTPVEVTVVLGKEDLTIKISDRGGGVPLRITDRLFSYMYSTAPTPVMDNSRNAPLAGFGYGLPISRLYAKYFQGDLHLYSLSGYGTDAIIYLKALSSESVEKLPVFNKSAFKHYQMSIEADDWCIPSKEPKNLAKEKVAV.

Residues 138–368 (IIEYKDSCTV…DAIIYLKALS (231 aa)) enclose the Histidine kinase domain. Residues 254–261 (ELFKNAMR), Asp-293, 312–313 (ST), and 329–334 (GFGYGL) each bind ATP.

The protein belongs to the PDK/BCKDK protein kinase family. As to quaternary structure, homodimer. Interacts with the pyruvate dehydrogenase complex subunit DLAT, and is part of the multimeric pyruvate dehydrogenase complex that contains multiple copies of pyruvate dehydrogenase (E1), dihydrolipoamide acetyltransferase (DLAT, E2) and lipoamide dehydrogenase (DLD, E3). As to expression, detected in heart, white adipose tissue and muscle.

Its subcellular location is the mitochondrion matrix. The catalysed reaction is L-seryl-[pyruvate dehydrogenase E1 alpha subunit] + ATP = O-phospho-L-seryl-[pyruvate dehydrogenase E1 alpha subunit] + ADP + H(+). Kinase that plays a key role in regulation of glucose and fatty acid metabolism and homeostasis via phosphorylation of the pyruvate dehydrogenase subunits PDHA1 and PDHA2. This inhibits pyruvate dehydrogenase activity, and thereby regulates metabolite flux through the tricarboxylic acid cycle, down-regulates aerobic respiration and inhibits the formation of acetyl-coenzyme A from pyruvate. Inhibition of pyruvate dehydrogenase decreases glucose utilization and increases fat metabolism in response to prolonged fasting and starvation. Plays an important role in maintaining normal blood glucose levels under starvation, and is involved in the insulin signaling cascade. Via its regulation of pyruvate dehydrogenase activity, plays an important role in maintaining normal blood pH and in preventing the accumulation of ketone bodies under starvation. In the fed state, mediates cellular responses to glucose levels and to a high-fat diet. Regulates both fatty acid oxidation and de novo fatty acid biosynthesis. Plays a role in the generation of reactive oxygen species. Protects detached epithelial cells against anoikis. Plays a role in cell proliferation via its role in regulating carbohydrate and fatty acid metabolism. The protein is [Pyruvate dehydrogenase (acetyl-transferring)] kinase isozyme 4, mitochondrial (PDK4) of Rhinolophus ferrumequinum (Greater horseshoe bat).